Consider the following 656-residue polypeptide: Methylenetetrahydrofolate reductase (NADPH) (656 aa).

Positions 1–12 are enriched in polar residues; sequence MVNEARGNSSLN. The interval 1-44 is disordered; the sequence is MVNEARGNSSLNPCLEGSASSGSESSKDSSRCSTPGLDPERHER. Residues S9, S10, S18, S20, S21, S23, S25, S26, S29, and S30 each carry the phosphoserine modification. T34 is modified (phosphothreonine). Catalysis depends on E63, which acts as the Proton donor/acceptor. 63 to 68 serves as a coordination point for NAD(+); that stretch reads EFFPPR. The residue at position 90 (Y90) is a Phosphotyrosine. T94 is subject to Phosphothreonine. Position 94–95 (94–95) interacts with NAD(+); the sequence is TW. Position 94-95 (94-95) interacts with FAD; it reads TW. S103 carries the post-translational modification Phosphoserine. FAD is bound by residues H127, 157-159, 174-175, Y197, 201-204, D210, and K217; these read RGD, YA, and HPEA. D159 lines the substrate pocket. Residues Q228, Y321, and R325 each contribute to the substrate site. Phosphoserine is present on S394. T451 carries the phosphothreonine modification. Residues N456, 461-464, 481-485, T560, and T573 each bind S-adenosyl-L-methionine; these read AAET and TINSQ.

Belongs to the methylenetetrahydrofolate reductase family. Homodimer. The cofactor is FAD. In terms of processing, phosphorylation of an N-terminal serine-rich phosphorylation region increases sensitivity to S-adenosylmethionine and inhibition.

The catalysed reaction is (6S)-5-methyl-5,6,7,8-tetrahydrofolate + NADP(+) = (6R)-5,10-methylene-5,6,7,8-tetrahydrofolate + NADPH + H(+). Its pathway is one-carbon metabolism; tetrahydrofolate interconversion. Its activity is regulated as follows. Allosterically regulated by S-adenosylmethionine (SAM). Functionally, catalyzes the conversion of 5,10-methylenetetrahydrofolate to 5-methyltetrahydrofolate, a cosubstrate for homocysteine remethylation to methionine. Represents a key regulatory connection between the folate and methionine cycles. This Homo sapiens (Human) protein is Methylenetetrahydrofolate reductase (NADPH).